The sequence spans 320 residues: o-succinylbenzoate synthase (320 aa).

The Proton donor role is filled by lysine 133. Residues aspartate 161, glutamate 190, and aspartate 213 each coordinate Mg(2+). Lysine 235 acts as the Proton acceptor in catalysis.

The protein belongs to the mandelate racemase/muconate lactonizing enzyme family. MenC type 1 subfamily. A divalent metal cation serves as cofactor.

The enzyme catalyses (1R,6R)-6-hydroxy-2-succinyl-cyclohexa-2,4-diene-1-carboxylate = 2-succinylbenzoate + H2O. It functions in the pathway quinol/quinone metabolism; 1,4-dihydroxy-2-naphthoate biosynthesis; 1,4-dihydroxy-2-naphthoate from chorismate: step 4/7. It participates in quinol/quinone metabolism; menaquinone biosynthesis. Converts 2-succinyl-6-hydroxy-2,4-cyclohexadiene-1-carboxylate (SHCHC) to 2-succinylbenzoate (OSB). The sequence is that of o-succinylbenzoate synthase from Salmonella agona (strain SL483).